The chain runs to 216 residues: Deoxyribose-phosphate aldolase (216 aa).

D89 functions as the Proton donor/acceptor in the catalytic mechanism. The active-site Schiff-base intermediate with acetaldehyde is the K153. K182 (proton donor/acceptor) is an active-site residue.

Belongs to the DeoC/FbaB aldolase family. DeoC type 1 subfamily.

It localises to the cytoplasm. The catalysed reaction is 2-deoxy-D-ribose 5-phosphate = D-glyceraldehyde 3-phosphate + acetaldehyde. The protein operates within carbohydrate degradation; 2-deoxy-D-ribose 1-phosphate degradation; D-glyceraldehyde 3-phosphate and acetaldehyde from 2-deoxy-alpha-D-ribose 1-phosphate: step 2/2. In terms of biological role, catalyzes a reversible aldol reaction between acetaldehyde and D-glyceraldehyde 3-phosphate to generate 2-deoxy-D-ribose 5-phosphate. In Treponema denticola (strain ATCC 35405 / DSM 14222 / CIP 103919 / JCM 8153 / KCTC 15104), this protein is Deoxyribose-phosphate aldolase.